The primary structure comprises 602 residues: Multicopper oxidase aurL2 (602 aa).

The first 17 residues, 1 to 17 (MLFRFLALLPFVAGAFA), serve as a signal peptide directing secretion. Plastocyanin-like domains follow at residues 38-149 (DIKI…VRDA) and 160-317 (IPLL…KYRC). 2 N-linked (GlcNAc...) asparagine glycosylation sites follow: Asn52 and Asn80. 4 residues coordinate Cu cation: His84, His86, His130, and His132. Residues Asn201, Asn247, Asn337, Asn383, Asn387, Asn419, and Asn424 are each glycosylated (N-linked (GlcNAc...) asparagine). Residues 421 to 556 (TTPNYTLALE…QVMGMATVWV (136 aa)) enclose the Plastocyanin-like 3 domain. His469 serves as a coordination point for Cu cation. Residues Asn482 and Asn486 are each glycosylated (N-linked (GlcNAc...) asparagine).

The protein belongs to the multicopper oxidase family.

It functions in the pathway pigment biosynthesis. In terms of biological role, multicopper oxidase; part of the gene cluster that mediates the biosynthesis of aurofusarin, a red mycelium pigment which is acting as a mycotoxin. The first step is performed by the polyketide synthase which condenses one acetyl-CoA and 6 malonyl-CoA units to form the first intermediate, the cyclic heptaketide and yellow pigment YWA1. The C2 hydroxyl group in the pyrone ring of YWA1 is probably formed during ring closure by an aldol-type cyclization reaction. The dehydratase aurZ then acts as the first tailoring enzyme in the aurofusarin biosynthetic pathway by converting YWA1 to nor-rubrofusarin. Nor-rubrofusarin is then methylated to rubrofusarin by the O-methyltransferase aurJ. Rubrofusarin is then transported across the plasma membrane by the rubrofusarin-specific pump aurT for further enzymatic processing by the extracellular complex composed of GIP1, aurF, aurO and aurS to yield aurofusarin. This Gibberella zeae (strain ATCC MYA-4620 / CBS 123657 / FGSC 9075 / NRRL 31084 / PH-1) (Wheat head blight fungus) protein is Multicopper oxidase aurL2 (aurL2).